Here is a 238-residue protein sequence, read N- to C-terminus: Ribose-5-phosphate isomerase A (238 aa).

Substrate is bound by residues 30 to 33 (SGST), 87 to 90 (DGAD), and 100 to 103 (KGGG). The active-site Proton acceptor is the Glu109. Lys127 lines the substrate pocket.

This sequence belongs to the ribose 5-phosphate isomerase family. As to quaternary structure, homodimer.

It catalyses the reaction aldehydo-D-ribose 5-phosphate = D-ribulose 5-phosphate. Its pathway is carbohydrate degradation; pentose phosphate pathway; D-ribose 5-phosphate from D-ribulose 5-phosphate (non-oxidative stage): step 1/1. Catalyzes the reversible conversion of ribose-5-phosphate to ribulose 5-phosphate. This chain is Ribose-5-phosphate isomerase A, found in Synechococcus sp. (strain WH7803).